The following is a 150-amino-acid chain: Sec-independent protein translocase protein TatB (150 aa).

A helical transmembrane segment spans residues 1–21 (MFDLSWSEIALVGVVALIVIG). Residues 77-86 (KIDQAIDPDG) show a composition bias toward basic and acidic residues. Positions 77–150 (KIDQAIDPDG…RTDGSLPPQD (74 aa)) are disordered. Pro residues predominate over residues 109-135 (AAPPSLPPQAPAQPVPPATGAAPPSPS).

Belongs to the TatB family. As to quaternary structure, the Tat system comprises two distinct complexes: a TatABC complex, containing multiple copies of TatA, TatB and TatC subunits, and a separate TatA complex, containing only TatA subunits. Substrates initially bind to the TatABC complex, which probably triggers association of the separate TatA complex to form the active translocon.

Its subcellular location is the cell inner membrane. Its function is as follows. Part of the twin-arginine translocation (Tat) system that transports large folded proteins containing a characteristic twin-arginine motif in their signal peptide across membranes. Together with TatC, TatB is part of a receptor directly interacting with Tat signal peptides. TatB may form an oligomeric binding site that transiently accommodates folded Tat precursor proteins before their translocation. The sequence is that of Sec-independent protein translocase protein TatB from Rhodospirillum rubrum (strain ATCC 11170 / ATH 1.1.1 / DSM 467 / LMG 4362 / NCIMB 8255 / S1).